The primary structure comprises 173 residues: Bifunctional protein PyrR (173 aa).

Residues 93-105 carry the PRPP-binding motif; that stretch reads VILVDDVLYTGRT.

Belongs to the purine/pyrimidine phosphoribosyltransferase family. PyrR subfamily. As to quaternary structure, homodimer and homohexamer; in equilibrium.

It catalyses the reaction UMP + diphosphate = 5-phospho-alpha-D-ribose 1-diphosphate + uracil. In terms of biological role, regulates transcriptional attenuation of the pyrimidine nucleotide (pyr) operon by binding in a uridine-dependent manner to specific sites on pyr mRNA. This disrupts an antiterminator hairpin in the RNA and favors formation of a downstream transcription terminator, leading to a reduced expression of downstream genes. Functionally, also displays a weak uracil phosphoribosyltransferase activity which is not physiologically significant. The chain is Bifunctional protein PyrR from Streptococcus thermophilus (strain ATCC BAA-491 / LMD-9).